The following is a 95-amino-acid chain: uncharacterized protein (95 aa).

Position 21 (Lys21) interacts with phosphate. Asp44 provides a ligand contact to Mg(2+). Phosphate is bound at residue Asn47.

This sequence belongs to the HAD-like hydrolase superfamily. Cof family. Mg(2+) is required as a cofactor.

This is an uncharacterized protein from Geobacillus stearothermophilus (Bacillus stearothermophilus).